The primary structure comprises 384 residues: Guanine nucleotide-binding protein alpha-2 subunit (384 aa).

Residues 1–23 (MGLVCSRNRRYRDSDPEENAQAA) are disordered. Gly2 carries N-myristoyl glycine lipidation. Cys5 is lipidated: S-palmitoyl cysteine. Residues 38–384 (HIQKLLLLGA…RRNLFEAGLL (347 aa)) enclose the G-alpha domain. Residues 41 to 54 (KLLLLGAGESGKST) are G1 motif. GTP is bound by residues Glu49, Ser50, Gly51, Lys52, Ser53, Thr54, Asp163, Leu188, Tyr189, Thr194, Gly222, Asn288, Lys289, Asp291, and Ala356. Ser53 contributes to the Mg(2+) binding site. The tract at residues 186 to 194 (DVLYARVRT) is G2 motif. A Mg(2+)-binding site is contributed by Thr194. Residues 215 to 224 (YRLFDVGGQR) are G3 motif. The G4 motif stretch occupies residues 284 to 291 (MLFLNKFD). Residues 354–359 (TTALDQ) are G5 motif.

It belongs to the G-alpha family. In terms of assembly, g proteins are composed of 3 units; alpha, beta and gamma. The alpha chain contains the guanine nucleotide binding site. The cofactor is Mg(2+).

In terms of biological role, guanine nucleotide-binding proteins (G proteins) are involved as modulators or transducers in various transmembrane signaling systems. The polypeptide is Guanine nucleotide-binding protein alpha-2 subunit (GPA2) (Pisum sativum (Garden pea)).